A 252-amino-acid polypeptide reads, in one-letter code: ATP synthase subunit a (252 aa).

6 consecutive transmembrane segments (helical) span residues 29-49 (FTNS…FLFL), 87-107 (FFPL…LGLF), 117-137 (IIVT…YGFM), 146-166 (LFVP…IEVI), 188-208 (ITLK…AVGV), and 211-231 (SILP…VAFL).

Belongs to the ATPase A chain family. In terms of assembly, F-type ATPases have 2 components, CF(1) - the catalytic core - and CF(0) - the membrane proton channel. CF(1) has five subunits: alpha(3), beta(3), gamma(1), delta(1), epsilon(1). CF(0) has three main subunits: a(1), b(2) and c(9-12). The alpha and beta chains form an alternating ring which encloses part of the gamma chain. CF(1) is attached to CF(0) by a central stalk formed by the gamma and epsilon chains, while a peripheral stalk is formed by the delta and b chains.

It is found in the cell inner membrane. In terms of biological role, key component of the proton channel; it plays a direct role in the translocation of protons across the membrane. The protein is ATP synthase subunit a of Mesorhizobium japonicum (strain LMG 29417 / CECT 9101 / MAFF 303099) (Mesorhizobium loti (strain MAFF 303099)).